Here is a 419-residue protein sequence, read N- to C-terminus: Elongation factor Tu, chloroplastic (419 aa).

The 205-residue stretch at 10–214 folds into the tr-type G domain; it reads KPHVNIGTIG…TVDEHIPTPK (205 aa). The tract at residues 19-26 is G1; it reads GHVDHGKT. 19-26 provides a ligand contact to GTP; sequence GHVDHGKT. T26 provides a ligand contact to Mg(2+). Positions 60-64 are G2; it reads GITIN. Positions 81-84 are G3; it reads DCPG. Residues 81 to 85 and 136 to 139 contribute to the GTP site; these read DCPGH and NKAD. The segment at 136–139 is G4; that stretch reads NKAD. Positions 174 to 176 are G5; sequence SAL.

It belongs to the TRAFAC class translation factor GTPase superfamily. Classic translation factor GTPase family. EF-Tu/EF-1A subfamily.

The protein localises to the plastid. It is found in the chloroplast. It catalyses the reaction GTP + H2O = GDP + phosphate + H(+). In terms of biological role, GTP hydrolase that promotes the GTP-dependent binding of aminoacyl-tRNA to the A-site of ribosomes during protein biosynthesis. The protein is Elongation factor Tu, chloroplastic (tufA) of Stigeoclonium helveticum (Green alga).